Reading from the N-terminus, the 122-residue chain is Large ribosomal subunit protein uL14 (122 aa).

The protein belongs to the universal ribosomal protein uL14 family. As to quaternary structure, part of the 50S ribosomal subunit. Forms a cluster with proteins L3 and L19. In the 70S ribosome, L14 and L19 interact and together make contacts with the 16S rRNA in bridges B5 and B8.

Its function is as follows. Binds to 23S rRNA. Forms part of two intersubunit bridges in the 70S ribosome. The chain is Large ribosomal subunit protein uL14 from Pelodictyon phaeoclathratiforme (strain DSM 5477 / BU-1).